The following is a 217-amino-acid chain: Non-structural protein NS3 (217 aa).

It belongs to the orbivirus NS3 family.

In terms of biological role, may play a role in the release of virions from infected cells. The polypeptide is Non-structural protein NS3 (Segment-10) (Camelus dromedarius (Dromedary)).